Reading from the N-terminus, the 275-residue chain is 3-methyl-2-oxobutanoate hydroxymethyltransferase (275 aa).

Mg(2+)-binding residues include aspartate 44 and aspartate 83. Residues 44–45 (DS), aspartate 83, and lysine 113 each bind 3-methyl-2-oxobutanoate. Residue glutamate 115 participates in Mg(2+) binding. The Proton acceptor role is filled by glutamate 182.

It belongs to the PanB family. As to quaternary structure, homodecamer; pentamer of dimers. Mg(2+) serves as cofactor.

The protein resides in the cytoplasm. It catalyses the reaction 3-methyl-2-oxobutanoate + (6R)-5,10-methylene-5,6,7,8-tetrahydrofolate + H2O = 2-dehydropantoate + (6S)-5,6,7,8-tetrahydrofolate. It functions in the pathway cofactor biosynthesis; (R)-pantothenate biosynthesis; (R)-pantoate from 3-methyl-2-oxobutanoate: step 1/2. Catalyzes the reversible reaction in which hydroxymethyl group from 5,10-methylenetetrahydrofolate is transferred onto alpha-ketoisovalerate to form ketopantoate. The sequence is that of 3-methyl-2-oxobutanoate hydroxymethyltransferase from Clostridium botulinum (strain Kyoto / Type A2).